The chain runs to 396 residues: Phosphoglycerate kinase (396 aa).

Substrate is bound by residues 21-23, arginine 36, 59-62, arginine 118, and arginine 151; these read DIN and HFGR. ATP contacts are provided by residues lysine 201, glutamate 323, and 353–356; that span reads GGDT.

Belongs to the phosphoglycerate kinase family. In terms of assembly, monomer.

The protein resides in the cytoplasm. The enzyme catalyses (2R)-3-phosphoglycerate + ATP = (2R)-3-phospho-glyceroyl phosphate + ADP. The protein operates within carbohydrate degradation; glycolysis; pyruvate from D-glyceraldehyde 3-phosphate: step 2/5. This is Phosphoglycerate kinase from Ruegeria sp. (strain TM1040) (Silicibacter sp.).